A 429-amino-acid chain; its full sequence is Glutamyl-tRNA reductase (429 aa).

Residues 50–53 (TCNR), serine 110, 115–117 (ETQ), and glutamine 121 each bind substrate. The active-site Nucleophile is cysteine 51. 190-195 (GAGEMA) lines the NADP(+) pocket.

This sequence belongs to the glutamyl-tRNA reductase family. As to quaternary structure, homodimer.

It catalyses the reaction (S)-4-amino-5-oxopentanoate + tRNA(Glu) + NADP(+) = L-glutamyl-tRNA(Glu) + NADPH + H(+). The protein operates within porphyrin-containing compound metabolism; protoporphyrin-IX biosynthesis; 5-aminolevulinate from L-glutamyl-tRNA(Glu): step 1/2. Its function is as follows. Catalyzes the NADPH-dependent reduction of glutamyl-tRNA(Glu) to glutamate 1-semialdehyde (GSA). The sequence is that of Glutamyl-tRNA reductase from Campylobacter hominis (strain ATCC BAA-381 / DSM 21671 / CCUG 45161 / LMG 19568 / NCTC 13146 / CH001A).